A 204-amino-acid polypeptide reads, in one-letter code: Peptide deformylase (204 aa).

Fe cation is bound by residues C131 and H174. Residue E175 is part of the active site. Residue H178 coordinates Fe cation.

Belongs to the polypeptide deformylase family. The cofactor is Fe(2+).

The enzyme catalyses N-terminal N-formyl-L-methionyl-[peptide] + H2O = N-terminal L-methionyl-[peptide] + formate. In terms of biological role, removes the formyl group from the N-terminal Met of newly synthesized proteins. Requires at least a dipeptide for an efficient rate of reaction. N-terminal L-methionine is a prerequisite for activity but the enzyme has broad specificity at other positions. This Streptococcus pyogenes serotype M49 (strain NZ131) protein is Peptide deformylase.